The primary structure comprises 173 residues: Adenine phosphoribosyltransferase (173 aa).

It belongs to the purine/pyrimidine phosphoribosyltransferase family. In terms of assembly, homodimer.

It is found in the cytoplasm. It catalyses the reaction AMP + diphosphate = 5-phospho-alpha-D-ribose 1-diphosphate + adenine. The protein operates within purine metabolism; AMP biosynthesis via salvage pathway; AMP from adenine: step 1/1. Functionally, catalyzes a salvage reaction resulting in the formation of AMP, that is energically less costly than de novo synthesis. The sequence is that of Adenine phosphoribosyltransferase from Solibacter usitatus (strain Ellin6076).